The primary structure comprises 509 residues: Glycogen synthase 2 (509 aa).

Lys15 serves as a coordination point for ADP-alpha-D-glucose.

It belongs to the glycosyltransferase 1 family. Bacterial/plant glycogen synthase subfamily.

It carries out the reaction [(1-&gt;4)-alpha-D-glucosyl](n) + ADP-alpha-D-glucose = [(1-&gt;4)-alpha-D-glucosyl](n+1) + ADP + H(+). It participates in glycan biosynthesis; glycogen biosynthesis. Functionally, synthesizes alpha-1,4-glucan chains using ADP-glucose. This Agrobacterium fabrum (strain C58 / ATCC 33970) (Agrobacterium tumefaciens (strain C58)) protein is Glycogen synthase 2 (glgA2).